A 358-amino-acid chain; its full sequence is DNA primase large subunit PriL (358 aa).

Cys-234, Cys-306, Cys-315, and Cys-322 together coordinate [4Fe-4S] cluster. The tract at residues Lys-335 to Ala-358 is disordered. The span at Asp-338–Ala-358 shows a compositional bias: acidic residues.

It belongs to the eukaryotic-type primase large subunit family. As to quaternary structure, heterodimer of a small subunit (PriS) and a large subunit (PriL). The cofactor is [4Fe-4S] cluster.

In terms of biological role, regulatory subunit of DNA primase, an RNA polymerase that catalyzes the synthesis of short RNA molecules used as primers for DNA polymerase during DNA replication. Stabilizes and modulates the activity of the small subunit, increasing the rate of DNA synthesis, and conferring RNA synthesis capability. The DNA polymerase activity may enable DNA primase to also catalyze primer extension after primer synthesis. May also play a role in DNA repair. The polypeptide is DNA primase large subunit PriL (Haloarcula marismortui (strain ATCC 43049 / DSM 3752 / JCM 8966 / VKM B-1809) (Halobacterium marismortui)).